Here is a 238-residue protein sequence, read N- to C-terminus: Nucleoside diphosphate kinase III, chloroplastic/mitochondrial (238 aa).

The N-terminal 85 residues, 1–85 (MSSQICRSAS…YMIQDQEVLA (85 aa)), are a transit peptide targeting the chloroplast and mitochondrion. ATP is bound by residues lysine 96, phenylalanine 144, arginine 172, threonine 178, arginine 189, and asparagine 199. The Pros-phosphohistidine intermediate role is filled by histidine 202.

The protein belongs to the NDK family. Homohexamer. It depends on Mg(2+) as a cofactor.

The protein localises to the plastid. Its subcellular location is the chloroplast thylakoid lumen. It localises to the mitochondrion intermembrane space. The catalysed reaction is a 2'-deoxyribonucleoside 5'-diphosphate + ATP = a 2'-deoxyribonucleoside 5'-triphosphate + ADP. The enzyme catalyses a ribonucleoside 5'-diphosphate + ATP = a ribonucleoside 5'-triphosphate + ADP. Its function is as follows. Major role in the synthesis of nucleoside triphosphates other than ATP. The ATP gamma phosphate is transferred to the NDP beta phosphate via a ping-pong mechanism, using a phosphorylated active-site intermediate. Shows the highest specificity towards GDP. In Arabidopsis thaliana (Mouse-ear cress), this protein is Nucleoside diphosphate kinase III, chloroplastic/mitochondrial (NDPK3).